The following is a 56-amino-acid chain: Photosystem II reaction center protein K (56 aa).

Residues 1–19 (MLNFLLQNTFVLWSNFILC) constitute a propeptide that is removed on maturation. The helical transmembrane segment at 35 to 55 (MPVIPVFFFLLAFVWQAAVSF) threads the bilayer.

The protein belongs to the PsbK family. PSII is composed of 1 copy each of membrane proteins PsbA, PsbB, PsbC, PsbD, PsbE, PsbF, PsbH, PsbI, PsbJ, PsbK, PsbL, PsbM, PsbT, PsbX, PsbY, PsbZ, Psb30/Ycf12, at least 3 peripheral proteins of the oxygen-evolving complex and a large number of cofactors. It forms dimeric complexes.

The protein resides in the plastid. Its subcellular location is the chloroplast thylakoid membrane. Functionally, one of the components of the core complex of photosystem II (PSII). PSII is a light-driven water:plastoquinone oxidoreductase that uses light energy to abstract electrons from H(2)O, generating O(2) and a proton gradient subsequently used for ATP formation. It consists of a core antenna complex that captures photons, and an electron transfer chain that converts photonic excitation into a charge separation. The protein is Photosystem II reaction center protein K of Welwitschia mirabilis (Tree tumbo).